We begin with the raw amino-acid sequence, 471 residues long: Arginine biosynthesis bifunctional protein ArgJ, mitochondrial (471 aa).

The substrate site is built by T201, K230, T241, E328, N466, and T471. Residue T241 is the Nucleophile of the active site.

It belongs to the ArgJ family. In terms of assembly, heterodimer of an alpha and a beta chain. Post-translationally, the alpha and beta chains are autoproteolytically processed from a single precursor protein within the mitochondrion.

Its subcellular location is the mitochondrion matrix. It catalyses the reaction N(2)-acetyl-L-ornithine + L-glutamate = N-acetyl-L-glutamate + L-ornithine. The enzyme catalyses L-glutamate + acetyl-CoA = N-acetyl-L-glutamate + CoA + H(+). It participates in amino-acid biosynthesis; L-arginine biosynthesis; L-ornithine and N-acetyl-L-glutamate from L-glutamate and N(2)-acetyl-L-ornithine (cyclic): step 1/1. The protein operates within amino-acid biosynthesis; L-arginine biosynthesis; N(2)-acetyl-L-ornithine from L-glutamate: step 1/4. Functionally, catalyzes two activities which are involved in the cyclic version of arginine biosynthesis: the synthesis of acetylglutamate from glutamate and acetyl-CoA, and of ornithine by transacetylation between acetylornithine and glutamate. The protein is Arginine biosynthesis bifunctional protein ArgJ, mitochondrial of Ajellomyces capsulatus (strain NAm1 / WU24) (Darling's disease fungus).